A 466-amino-acid chain; its full sequence is MLPSTIQTLTLFLTSGGVLLSLYVSASLSYLLYSDILLKFSPTKRTAPTMSLECVNVSNAQAVNHSATKEMTFLLPEPEWTYPRLSCQGSTFQKALLISPHRFGETRGNSAPLIIREPFVACGPKECRHFALTHYAAQPGGYYNGTRKDRNKLRHLISVKLGKIPTVENSIFHMAAWSGSACHDGREWTYIGVDGPDSDALIKIKYGEAYTDTYHSYAHNILRTQESACNCIGGDCYLMITDGSASGISKCRFLKIREGRIIKEIFPAGRVEHTEECTCGFASNKTIECACRDNSYTAKRPFVKLNVETDTAEIRLMCTETYLDTPRPDDGSITGPCESNGDKGLGGIKGGFVHQRMASKIGRWYSRTMSKTERMGMELYVKYDGDPWTDSDALAPSGVMVSIKEPGWYSFGFEIKDKKCDVPCIGIEMVHDGGKETWHSAATAIYCLMGSGQLLWDTVTGVDMAL.

Over methionine 1–leucine 11 the chain is Intravirion. The chain crosses the membrane as a helical span at residues phenylalanine 12–serine 34. Positions leucine 13–aspartate 35 are involved in apical transport and lipid raft association. Residues aspartate 35–leucine 466 lie on the Virion surface side of the membrane. Residues leucine 38–serine 86 are hypervariable stalk region. Residues asparagine 56 and asparagine 64 are each glycosylated (N-linked (GlcNAc...) asparagine; by host). Intrachain disulfides connect cysteine 87-cysteine 420, cysteine 122-cysteine 127, cysteine 182-cysteine 229, cysteine 231-cysteine 236, cysteine 277-cysteine 291, cysteine 279-cysteine 289, cysteine 318-cysteine 337, and cysteine 424-cysteine 447. A head of neuraminidase region spans residues glycine 89–leucine 466. Arginine 116 contacts substrate. N-linked (GlcNAc...) asparagine; by host glycosylation occurs at asparagine 144. The active-site Proton donor/acceptor is aspartate 149. Arginine 150 provides a ligand contact to substrate. Glutamate 275–glutamate 276 serves as a coordination point for substrate. Asparagine 284 is a glycosylation site (N-linked (GlcNAc...) asparagine; by host). Arginine 292 provides a ligand contact to substrate. Residues aspartate 293 and aspartate 324 each coordinate Ca(2+). A substrate-binding site is contributed by arginine 374. The active-site Nucleophile is tyrosine 409.

The protein belongs to the glycosyl hydrolase 34 family. As to quaternary structure, homotetramer. Ca(2+) is required as a cofactor. Post-translationally, N-glycosylated.

The protein localises to the virion membrane. It is found in the host apical cell membrane. It catalyses the reaction Hydrolysis of alpha-(2-&gt;3)-, alpha-(2-&gt;6)-, alpha-(2-&gt;8)- glycosidic linkages of terminal sialic acid residues in oligosaccharides, glycoproteins, glycolipids, colominic acid and synthetic substrates.. With respect to regulation, inhibited by the neuraminidase inhibitors zanamivir (Relenza) and oseltamivir (Tamiflu). These drugs interfere with the release of progeny virus from infected cells and are effective against all influenza strains. Resistance to neuraminidase inhibitors is quite rare. In terms of biological role, catalyzes the removal of terminal sialic acid residues from viral and cellular glycoconjugates. Cleaves off the terminal sialic acids on the glycosylated HA during virus budding to facilitate virus release. Additionally helps virus spread through the circulation by further removing sialic acids from the cell surface. These cleavages prevent self-aggregation and ensure the efficient spread of the progeny virus from cell to cell. Otherwise, infection would be limited to one round of replication. Described as a receptor-destroying enzyme because it cleaves a terminal sialic acid from the cellular receptors. May facilitate viral invasion of the upper airways by cleaving the sialic acid moieties on the mucin of the airway epithelial cells. Likely to plays a role in the budding process through its association with lipid rafts during intracellular transport. May additionally display a raft-association independent effect on budding. Plays a role in the determination of host range restriction on replication and virulence. Sialidase activity in late endosome/lysosome traffic seems to enhance virus replication. This chain is Neuraminidase, found in Influenza B virus (strain B/Maryland/1959).